A 207-amino-acid chain; its full sequence is 5-amino-6-(5-phosphoribosylamino)uracil reductase (207 aa).

Residue S6 coordinates substrate. W8 serves as a coordination point for NADP(+). Position 22 (R22) interacts with substrate. D38 provides a ligand contact to NADP(+). Substrate-binding residues include L42 and R45. S72 serves as a coordination point for NADP(+). E137 contributes to the substrate binding site.

The protein belongs to the HTP reductase family.

It catalyses the reaction 5-amino-6-(5-phospho-D-ribitylamino)uracil + NADP(+) = 5-amino-6-(5-phospho-D-ribosylamino)uracil + NADPH + H(+). The protein operates within cofactor biosynthesis; riboflavin biosynthesis; 5-amino-6-(D-ribitylamino)uracil from GTP: step 3/4. This is 5-amino-6-(5-phosphoribosylamino)uracil reductase (ribD2) from Buchnera aphidicola subsp. Acyrthosiphon pisum (strain APS) (Acyrthosiphon pisum symbiotic bacterium).